We begin with the raw amino-acid sequence, 443 residues long: MNIKKCKQLLMSLVVLTLAVTCLAPMSKAKAASDPIDINASAAIMIEASSGKILYSKNADKRLPIASMTKMMTEYLLLEAIDQGKVKWDQTYTPDDYVYEISQDNSLSNVPLRKDGKYTVKELYQATAIYSANAAAIAIAEIVAGSETKFVEKMNAKAKELGLTDYKFVNATGLENKDLHGHQPEGTSVNEESEVSAKDMAVLADHLITDYPEILETSSIAKTKFREGTDDEMDMPNWNFMLKGLVSEYKKATVDGLKTGSTDSAGSCFTGTAERNGMRVITVVLNAKGNLHTGRFDETKKMFDYAFDNFSMKEIYAEGDQVKGHKTISVDKGKEKEVGIVTNKAFSLPVKNGEEKNYKAKVTLNKDNLTAPVKKGTKVGKLTAEYTGDEKDYGFLNSDLAGVDLVTKENVEKANWFVLTMRSIGGFFAGIWGSIVDTVTGWF.

Positions 1 to 31 (MNIKKCKQLLMSLVVLTLAVTCLAPMSKAKA) are cleaved as a signal peptide. Serine 67 serves as the catalytic Acyl-ester intermediate. Catalysis depends on lysine 70, which acts as the Proton acceptor. Serine 131 is an active-site residue. Lysine 258 provides a ligand contact to substrate.

This sequence belongs to the peptidase S11 family.

It localises to the secreted. The protein resides in the cell wall. It is found in the cell membrane. The protein localises to the membrane raft. It carries out the reaction Preferential cleavage: (Ac)2-L-Lys-D-Ala-|-D-Ala. Also transpeptidation of peptidyl-alanyl moieties that are N-acyl substituents of D-alanine.. The protein operates within cell wall biogenesis; peptidoglycan biosynthesis. Functionally, removes C-terminal D-alanyl residues from sugar-peptide cell wall precursors. In Bacillus subtilis (strain 168), this protein is D-alanyl-D-alanine carboxypeptidase DacA (dacA).